An 893-amino-acid polypeptide reads, in one-letter code: MVDTKNPGDKTLSVSPSKTLTLKPRVEQGTVRQSFSHGRTKQVVVEKRGKRRIGGEGGPADAPTAAAAAPAPAPAPVPSAAPRPAAPPPPSRPQQSRSQSPSRSGSGVVLRTLTEDERSARATALADARVRDEEERRAAEAEVARRNSAEGIAQAEREAAEARRKAEEERHRHEEEAKRKAELEAKRRFGEEEAKRPAAAATPAKSATPAARPTGAPAVRAPGVAAEAGDDDEGPRQVRRGPGGAARPVIPPKQPAAKPAPSKQRGRLTLVTALTADDVRERSIASFRRRTQRLKGHASNEPKEKLVREVIVPEAITIQELANRMSERAVDVIRMLMKQGAMHKINDVIDADTAQLIAEELGHTVKRVAASDVEEGLFDVVDNSTDTEPRSPVVTVMGHVDHGKTSLLDALRHANVVSGEAGGITQHIGAYQVTSPESGKKITFIDTPGHAAFTAMRARGAKVTDIVILVVAADDGVMPQTVEAINHAKAAGVPIIVAINKIDKPDAKPERVRTELLQYNVQVESLGGDTVDVEVSAKNKTNLDKLLEMIALQAELLDLKTNEQRPAEGTVIEAKLDRGRGPVATVLVQRGTLKVGDIIVAGAEMGRVRALISDQGDTVESAGPSVPVEVLGFNGPPEAGDRLAVVENEARARQVTSYRAHQKREKAASLTGGMRGSLEQMMSQLKTVGRKEFPLIIKADVQGSLEAILGSLEKLGTEEVAARILHAGVGGISESDVTLAEGFNAVILGFSVRANKEAAAAAKRNGIEIRYYNIIYDLVDDIKKAMSGLLAPTLRETMLGNALILEIFNISKVGKVAGCRVTDGTVERGANVRLIRDNVVVHEGKLSTLKRFKDEVKEVQSGQECGMAFENYTDMRAGDVIECYRVETIQRSL.

The disordered stretch occupies residues methionine 1–glycine 266. A compositionally biased stretch (low complexity) spans proline 59 to proline 70. Pro residues predominate over residues alanine 71–arginine 92. Residues proline 93–serine 104 show a composition bias toward low complexity. 2 stretches are compositionally biased toward basic and acidic residues: residues alanine 128–serine 148 and alanine 155–arginine 196. Residues proline 197 to alanine 226 show a composition bias toward low complexity. Residues proline 389–lysine 560 enclose the tr-type G domain. Positions glycine 398–threonine 405 are G1. Residue glycine 398 to threonine 405 coordinates GTP. The G2 stretch occupies residues glycine 423–histidine 427. Positions aspartate 446–glycine 449 are G3. Residues aspartate 446 to histidine 450 and asparagine 500 to aspartate 503 contribute to the GTP site. Residues asparagine 500 to aspartate 503 form a G4 region. A G5 region spans residues serine 536–lysine 538.

This sequence belongs to the TRAFAC class translation factor GTPase superfamily. Classic translation factor GTPase family. IF-2 subfamily.

Its subcellular location is the cytoplasm. Its function is as follows. One of the essential components for the initiation of protein synthesis. Protects formylmethionyl-tRNA from spontaneous hydrolysis and promotes its binding to the 30S ribosomal subunits. Also involved in the hydrolysis of GTP during the formation of the 70S ribosomal complex. This chain is Translation initiation factor IF-2, found in Rhodopseudomonas palustris (strain BisA53).